A 92-amino-acid chain; its full sequence is MARSLKKNPFVGNHLLKKINKLNTKGEKEIIVTWSRASTIIPTMIGHTIAVHNGKDHLPVYITDRMVGHKLGEFAPTRNFRGHVKNDNRSRR.

This sequence belongs to the universal ribosomal protein uS19 family.

Its subcellular location is the plastid. The protein resides in the chloroplast. In terms of biological role, protein S19 forms a complex with S13 that binds strongly to the 16S ribosomal RNA. The protein is Small ribosomal subunit protein uS19c of Cucumis sativus (Cucumber).